Here is a 107-residue protein sequence, read N- to C-terminus: MSEPDTSSGFSGSVENGTFLELFPTSLSTSVDPSSGHLSNVYIYVSIFLSLLAFLLLLLIIALQRLKNIISSSSSYPEYPSDAGSSFTNLEVCSISSQRSTFSNLSS.

A helical transmembrane segment spans residues 43 to 63 (IYVSIFLSLLAFLLLLLIIAL).

It is found in the membrane. The protein is Serine-rich and transmembrane domain-containing protein 1 (SERTM1) of Homo sapiens (Human).